We begin with the raw amino-acid sequence, 318 residues long: ATP-dependent (S)-NAD(P)H-hydrate dehydratase (318 aa).

The YjeF C-terminal domain maps to 3–313; it reads AREVFKRVIP…KEIGPAFDSL (311 aa). (6S)-NADPHX is bound by residues G119 and 172–178; that span reads NTNEFKR. ATP contacts are provided by residues 210–214 and 229–238; these read KGSKD and TSLRRCGGQG. D239 contacts (6S)-NADPHX.

The protein belongs to the NnrD/CARKD family. Mg(2+) serves as cofactor.

It localises to the cytoplasm. It carries out the reaction (6S)-NADHX + ATP = ADP + phosphate + NADH + H(+). It catalyses the reaction (6S)-NADPHX + ATP = ADP + phosphate + NADPH + H(+). In terms of biological role, catalyzes the dehydration of the S-form of NAD(P)HX at the expense of ATP, which is converted to ADP. Together with NAD(P)HX epimerase, which catalyzes the epimerization of the S- and R-forms, the enzyme allows the repair of both epimers of NAD(P)HX, a damaged form of NAD(P)H that is a result of enzymatic or heat-dependent hydration. The sequence is that of ATP-dependent (S)-NAD(P)H-hydrate dehydratase from Batrachochytrium dendrobatidis (strain JAM81 / FGSC 10211) (Frog chytrid fungus).